The primary structure comprises 271 residues: 2,3,4,5-tetrahydropyridine-2,6-dicarboxylate N-succinyltransferase (271 aa).

Positions 103 and 140 each coordinate substrate.

It belongs to the transferase hexapeptide repeat family. In terms of assembly, homotrimer.

It localises to the cytoplasm. The enzyme catalyses (S)-2,3,4,5-tetrahydrodipicolinate + succinyl-CoA + H2O = (S)-2-succinylamino-6-oxoheptanedioate + CoA. It participates in amino-acid biosynthesis; L-lysine biosynthesis via DAP pathway; LL-2,6-diaminopimelate from (S)-tetrahydrodipicolinate (succinylase route): step 1/3. This is 2,3,4,5-tetrahydropyridine-2,6-dicarboxylate N-succinyltransferase from Methylococcus capsulatus (strain ATCC 33009 / NCIMB 11132 / Bath).